We begin with the raw amino-acid sequence, 66 residues long: Large ribosomal subunit protein bL35 (66 aa).

Positions 1–46 (MPKMKTHRASAKRFKRTANGGLKRHHAFTGHRFHGKTKKQRRHLRK) are enriched in basic residues. Residues 1–52 (MPKMKTHRASAKRFKRTANGGLKRHHAFTGHRFHGKTKKQRRHLRKPAMVSR) are disordered.

It belongs to the bacterial ribosomal protein bL35 family.

The sequence is that of Large ribosomal subunit protein bL35 from Lactobacillus acidophilus (strain ATCC 700396 / NCK56 / N2 / NCFM).